A 308-amino-acid polypeptide reads, in one-letter code: 1,4-dihydroxy-2-naphthoate octaprenyltransferase (308 aa).

The Cytoplasmic segment spans residues 1–20 (MTEQQISRTQAWLESLRPKT). Residues 21–41 (LPLAFAAIIVGTALAWWQGHF) form a helical membrane-spanning segment. Residue Asp-42 is a topological domain, periplasmic. The helical transmembrane segment at 43-63 (PLVALLALITAGLLQILSNLA) threads the bilayer. The Cytoplasmic portion of the chain corresponds to 64 to 97 (NDYGDAVKGSDKPDRIGPLRGMQKGVITQQEMKR). The helical transmembrane segment at 98–118 (ALIITVVLICLSGLALVAVAC) threads the bilayer. Residues 119–123 (HTLAD) are Periplasmic-facing. The helical transmembrane segment at 124–144 (FVGFLILGGLSIIAAITYTVG) threads the bilayer. The Cytoplasmic portion of the chain corresponds to 145–148 (NRPY). Residues 149 to 169 (GYIGLGDISVLVFFGWLSVMG) traverse the membrane as a helical segment. Topologically, residues 170-176 (SWYLQAH) are periplasmic. A helical transmembrane segment spans residues 177 to 197 (TLIPALILPATACGLLATAVL). Residues 198-227 (NINNLRDINSDRENGKNTLVVRLGEVNARR) are Cytoplasmic-facing. A helical membrane pass occupies residues 228 to 247 (YHACLLMGSLVCLALFNLFS). Residues 248 to 250 (LHS) are Periplasmic-facing. A helical membrane pass occupies residues 251 to 270 (LWGWLFLLAAPLLVKQARYV). Topologically, residues 271-286 (MREMDPVAMRPMLERT) are cytoplasmic. A helical membrane pass occupies residues 287–307 (VKGALLTNLLFVLGIFLSQWA). Residue Ala-308 is a topological domain, periplasmic.

This sequence belongs to the MenA family. Type 1 subfamily.

It is found in the cell inner membrane. The enzyme catalyses an all-trans-polyprenyl diphosphate + 1,4-dihydroxy-2-naphthoate + H(+) = a 2-demethylmenaquinol + CO2 + diphosphate. Its pathway is quinol/quinone metabolism; menaquinone biosynthesis; menaquinol from 1,4-dihydroxy-2-naphthoate: step 1/2. In terms of biological role, conversion of 1,4-dihydroxy-2-naphthoate (DHNA) to demethylmenaquinone (DMK). Attaches octaprenylpyrophosphate, a membrane-bound 40-carbon side chain to DHNA. The conversion of DHNA to DMK proceeds in three stages: the removal of the carboxyl group of DHNA as CO(2), the attachment of the isoprenoid side chain, and a quinol-to-quinone oxidation, which is thought to be spontaneous. The protein is 1,4-dihydroxy-2-naphthoate octaprenyltransferase of Escherichia coli (strain K12).